The sequence spans 360 residues: Phospho-N-acetylmuramoyl-pentapeptide-transferase (360 aa).

10 helical membrane passes run 27 to 47, 72 to 92, 94 to 114, 132 to 152, 168 to 188, 199 to 219, 236 to 256, 263 to 283, 288 to 308, and 338 to 358; these read IVSLLTALFISLWMGPHLIAW, PTMGGLMILFSITISVLMWAY, SNPYVWCVLFILIGYGIVGFI, WKYFWQSIIALAAAFTMYSIG, IMPQLGLLYVLLAYFVIVGTS, GLAIMPTVFVAAGFALVAWAT, AGELVIVCTAIVGAGLGFLWF, VFMGDVGSLALGGALGTIAVL, FLLVIMGGVFVVETLSVILQV, and VIVRFWIISLMLVLIGLATLK.

The protein belongs to the glycosyltransferase 4 family. MraY subfamily. Mg(2+) is required as a cofactor.

The protein localises to the cell inner membrane. The enzyme catalyses UDP-N-acetyl-alpha-D-muramoyl-L-alanyl-gamma-D-glutamyl-meso-2,6-diaminopimeloyl-D-alanyl-D-alanine + di-trans,octa-cis-undecaprenyl phosphate = di-trans,octa-cis-undecaprenyl diphospho-N-acetyl-alpha-D-muramoyl-L-alanyl-D-glutamyl-meso-2,6-diaminopimeloyl-D-alanyl-D-alanine + UMP. The protein operates within cell wall biogenesis; peptidoglycan biosynthesis. Functionally, catalyzes the initial step of the lipid cycle reactions in the biosynthesis of the cell wall peptidoglycan: transfers peptidoglycan precursor phospho-MurNAc-pentapeptide from UDP-MurNAc-pentapeptide onto the lipid carrier undecaprenyl phosphate, yielding undecaprenyl-pyrophosphoryl-MurNAc-pentapeptide, known as lipid I. The polypeptide is Phospho-N-acetylmuramoyl-pentapeptide-transferase (Yersinia pestis bv. Antiqua (strain Angola)).